Consider the following 203-residue polypeptide: SOSS complex subunit B1 (203 aa).

Residues 22 to 92 (IVLETGRVTK…TLYTGRGGDL (71 aa)) constitute a DNA-binding region (OB). A disordered region spans residues 111–203 (PNPEYIAQQS…GKEPRRTGKR (93 aa)). Over residues 117-128 (AQQSQNKQAQAE) the composition is skewed to polar residues. Residues 129–140 (SGTGTNSHNSSS) are compositionally biased toward low complexity. Residues 149 to 182 (ENGNGSNSSGPPTHQSTAPTHSTSGRITRSQPNH) are compositionally biased toward polar residues.

The protein belongs to the SOSS-B family. SOSS-B1 subfamily. In terms of assembly, component of the SOSS complex, composed of soss-b (soss-b1/nabp2 or soss-b2/nabp1), soss-a/ints3 and soss-c/inip. SOSS complexes containing soss-b1/nabp2 are more abundant than complexes containing soss-b2/nabp1.

The protein resides in the nucleus. Its function is as follows. Component of the SOSS complex, a multiprotein complex that functions downstream of the MRN complex to promote DNA repair and G2/M checkpoint. In the SOSS complex, acts as a sensor of single-stranded DNA that binds to single-stranded DNA. The SOSS complex associates with DNA lesions and influences diverse endpoints in the cellular DNA damage response including cell-cycle checkpoint activation, recombinational repair and maintenance of genomic stability. Required for efficient homologous recombination-dependent repair of double-strand breaks (DSBs). In Xenopus tropicalis (Western clawed frog), this protein is SOSS complex subunit B1 (nabp2).